A 185-amino-acid chain; its full sequence is Ribosome-recycling factor (185 aa).

A disordered region spans residues 137 to 166 (DGLKKAEKDGDIGQDESRGQSEKVQKMTDD).

This sequence belongs to the RRF family.

It is found in the cytoplasm. Its function is as follows. Responsible for the release of ribosomes from messenger RNA at the termination of protein biosynthesis. May increase the efficiency of translation by recycling ribosomes from one round of translation to another. The sequence is that of Ribosome-recycling factor from Agrobacterium fabrum (strain C58 / ATCC 33970) (Agrobacterium tumefaciens (strain C58)).